Reading from the N-terminus, the 100-residue chain is Class II hydrophobin FOXG_02746 (100 aa).

The N-terminal stretch at 1-17 (MQFYTIVSLFLAGTAYA) is a signal peptide. 4 disulfides stabilise this stretch: C29-C79, C40-C70, C41-C53, and C80-C92.

It belongs to the cerato-ulmin hydrophobin family. In terms of assembly, homodimer. Homodimers further self-assemble to form highly ordered films at water-air interfaces through intermolecular interactions.

Its subcellular location is the secreted. The protein resides in the cell wall. Functionally, aerial growth, conidiation, and dispersal of filamentous fungi in the environment rely upon a capability of their secreting small amphipathic proteins called hydrophobins (HPBs) with low sequence identity. Class I can self-assemble into an outermost layer of rodlet bundles on aerial cell surfaces, conferring cellular hydrophobicity that supports fungal growth, development and dispersal; whereas Class II form highly ordered films at water-air interfaces through intermolecular interactions but contribute nothing to the rodlet structure. FOXG_02746 is a class II hydrophobin that is likely required for plant colonization. The protein is Class II hydrophobin FOXG_02746 of Fusarium oxysporum f. sp. lycopersici (strain 4287 / CBS 123668 / FGSC 9935 / NRRL 34936) (Fusarium vascular wilt of tomato).